We begin with the raw amino-acid sequence, 371 residues long: Spermatogenic leucine zipper protein 1 (371 aa).

Coiled-coil stretches lie at residues Glu96–Asp148 and Phe177–Glu289. Ser98 is modified (phosphoserine). The segment at Ile110–Ala120 is helix-loop-helix motif. The tract at residues Ser121–Arg188 is basic motif. Ser202 carries the post-translational modification Phosphoserine. Residues Lys223 to Ser240 show a composition bias toward polar residues. The tract at residues Lys223–Glu246 is disordered. The tract at residues Leu245–Leu266 is leucine-zipper.

Post-translationally, phosphorylated by MAPK1/ERK2 and MAPK3/ERK1.

The protein localises to the cytoplasm. It localises to the nucleus. Functionally, transcription factor that binds to the DNA sequence 5'-CANNTG-3'(E box) and the G-box motif. May play an important role in the regulation of cell proliferation and differentiation during spermatogenesis. This is Spermatogenic leucine zipper protein 1 (SPZ1) from Bos taurus (Bovine).